The chain runs to 208 residues: WEB family protein At2g17940 (208 aa).

The stretch at 78-113 (RTLQLNTSLSNRIKTLTQELELGKKEIQRLSRTRSS) forms a coiled coil.

The protein belongs to the WEB family.

This is WEB family protein At2g17940 from Arabidopsis thaliana (Mouse-ear cress).